Consider the following 715-residue polypeptide: Fatty acid oxidation complex subunit alpha (715 aa).

The tract at residues 1–190 (MIYEGKAITV…KVGAVDAVVA (190 aa)) is enoyl-CoA hydratase/isomerase. Asp-297 is a binding site for substrate. Residues 312–715 (HDVKQAAVLG…MAKNGQRFFN (404 aa)) are 3-hydroxyacyl-CoA dehydrogenase. NAD(+) is bound by residues Met-325, Asp-344, 401-403 (VVE), Lys-408, and Ser-430. Residue His-451 is the For 3-hydroxyacyl-CoA dehydrogenase activity of the active site. Asn-454 is a binding site for NAD(+). Substrate is bound by residues Asn-501 and Tyr-660.

This sequence in the N-terminal section; belongs to the enoyl-CoA hydratase/isomerase family. In the C-terminal section; belongs to the 3-hydroxyacyl-CoA dehydrogenase family. In terms of assembly, heterotetramer of two alpha chains (FadB) and two beta chains (FadA).

It catalyses the reaction a (3S)-3-hydroxyacyl-CoA + NAD(+) = a 3-oxoacyl-CoA + NADH + H(+). It carries out the reaction a (3S)-3-hydroxyacyl-CoA = a (2E)-enoyl-CoA + H2O. The catalysed reaction is a 4-saturated-(3S)-3-hydroxyacyl-CoA = a (3E)-enoyl-CoA + H2O. The enzyme catalyses (3S)-3-hydroxybutanoyl-CoA = (3R)-3-hydroxybutanoyl-CoA. It catalyses the reaction a (3Z)-enoyl-CoA = a 4-saturated (2E)-enoyl-CoA. It carries out the reaction a (3E)-enoyl-CoA = a 4-saturated (2E)-enoyl-CoA. It functions in the pathway lipid metabolism; fatty acid beta-oxidation. Functionally, involved in the aerobic and anaerobic degradation of long-chain fatty acids via beta-oxidation cycle. Catalyzes the formation of 3-oxoacyl-CoA from enoyl-CoA via L-3-hydroxyacyl-CoA. It can also use D-3-hydroxyacyl-CoA and cis-3-enoyl-CoA as substrate. This Pseudomonas putida (strain GB-1) protein is Fatty acid oxidation complex subunit alpha.